The sequence spans 314 residues: DNA-directed RNA polymerase subunit alpha (314 aa).

The tract at residues methionine 1 to threonine 228 is alpha N-terminal domain (alpha-NTD). The interval lysine 245–aspartate 314 is alpha C-terminal domain (alpha-CTD).

Belongs to the RNA polymerase alpha chain family. In terms of assembly, homodimer. The RNAP catalytic core consists of 2 alpha, 1 beta, 1 beta' and 1 omega subunit. When a sigma factor is associated with the core the holoenzyme is formed, which can initiate transcription.

It carries out the reaction RNA(n) + a ribonucleoside 5'-triphosphate = RNA(n+1) + diphosphate. In terms of biological role, DNA-dependent RNA polymerase catalyzes the transcription of DNA into RNA using the four ribonucleoside triphosphates as substrates. The polypeptide is DNA-directed RNA polymerase subunit alpha (Geobacillus thermodenitrificans (strain NG80-2)).